We begin with the raw amino-acid sequence, 355 residues long: UDP-3-O-acylglucosamine N-acyltransferase (355 aa).

His-258 (proton acceptor) is an active-site residue.

It belongs to the transferase hexapeptide repeat family. LpxD subfamily. As to quaternary structure, homotrimer.

The catalysed reaction is a UDP-3-O-[(3R)-3-hydroxyacyl]-alpha-D-glucosamine + a (3R)-hydroxyacyl-[ACP] = a UDP-2-N,3-O-bis[(3R)-3-hydroxyacyl]-alpha-D-glucosamine + holo-[ACP] + H(+). It participates in bacterial outer membrane biogenesis; LPS lipid A biosynthesis. In terms of biological role, catalyzes the N-acylation of UDP-3-O-acylglucosamine using 3-hydroxyacyl-ACP as the acyl donor. Is involved in the biosynthesis of lipid A, a phosphorylated glycolipid that anchors the lipopolysaccharide to the outer membrane of the cell. This chain is UDP-3-O-acylglucosamine N-acyltransferase, found in Bradyrhizobium sp. (strain BTAi1 / ATCC BAA-1182).